We begin with the raw amino-acid sequence, 249 residues long: Probable transcriptional regulatory protein Rru_A1086 (249 aa).

It belongs to the TACO1 family.

Its subcellular location is the cytoplasm. In Rhodospirillum rubrum (strain ATCC 11170 / ATH 1.1.1 / DSM 467 / LMG 4362 / NCIMB 8255 / S1), this protein is Probable transcriptional regulatory protein Rru_A1086.